We begin with the raw amino-acid sequence, 54 residues long: Ovomucoid (54 aa).

The Kazal-like domain occupies 4 to 54 (VDCSDYPKPACTLEYMPLCGSDNKTYGNKCNFCNAVVDSNGTLTLSHFGKC). 3 disulfide bridges follow: C6-C36, C14-C33, and C22-C54. Residue N43 is glycosylated (N-linked (GlcNAc...) asparagine).

It is found in the secreted. This chain is Ovomucoid, found in Dendrocygna arcuata (Wandering whistling-duck).